Consider the following 130-residue polypeptide: Small ribosomal subunit protein uS9 (130 aa).

A disordered region spans residues 104-130 (LTRDPRMKERRKYGLKKARKAPQFSKR). A compositionally biased stretch (basic residues) spans 111-130 (KERRKYGLKKARKAPQFSKR).

Belongs to the universal ribosomal protein uS9 family.

In Moorella thermoacetica (strain ATCC 39073 / JCM 9320), this protein is Small ribosomal subunit protein uS9.